We begin with the raw amino-acid sequence, 800 residues long: Serine/threonine-protein kinase KIN4 (800 aa).

In terms of domain architecture, Protein kinase spans 46 to 313 (YIIGSTLGEG…LQTIKRHVWL (268 aa)). ATP is bound by residues 52 to 60 (LGEGEFGKV) and Lys-80. Residue Asp-175 is the Proton acceptor of the active site. Disordered stretches follow at residues 331–397 (LQKE…GSKV) and 438–487 (SARH…TSFT). The span at 348–358 (STYSSSASSYS) shows a compositional bias: low complexity. Ser-365 and Ser-388 each carry phosphoserine. Composition is skewed to polar residues over residues 380-395 (QLAT…STGS) and 459-473 (GSPT…PSSK). Position 521 is a phosphoserine (Ser-521). 2 disordered regions span residues 629–661 (EPTN…DKDS) and 678–754 (SLNG…PGRS). The segment covering 678 to 721 (SLNGSRSTVESRTSKGNAPPVSSRNPSGQSNRSNIKITQQQPRN) has biased composition (polar residues). The span at 727–740 (PNPDKKINDNRIRD) shows a compositional bias: basic and acidic residues. At Ser-748 the chain carries Phosphoserine.

This sequence belongs to the protein kinase superfamily. Ser/Thr protein kinase family.

It catalyses the reaction L-seryl-[protein] + ATP = O-phospho-L-seryl-[protein] + ADP + H(+). The enzyme catalyses L-threonyl-[protein] + ATP = O-phospho-L-threonyl-[protein] + ADP + H(+). Its function is as follows. This protein is probably a serine/threonine protein kinase. The protein is Serine/threonine-protein kinase KIN4 (KIN4) of Saccharomyces cerevisiae (strain ATCC 204508 / S288c) (Baker's yeast).